The sequence spans 160 residues: Lymphocyte antigen 96 (160 aa).

A signal peptide spans 1–16 (MFPFMLFSTLFSSIFT). Intrachain disulfides connect cysteine 25-cysteine 51, cysteine 37-cysteine 148, and cysteine 95-cysteine 105. Asparagine 26 carries an N-linked (GlcNAc...) asparagine glycan. The N-linked (GlcNAc...) asparagine glycan is linked to asparagine 114. The interaction with lipopolysaccharide stretch occupies residues 119–123 (FSFQG). N-linked (GlcNAc...) asparagine glycosylation occurs at asparagine 150.

In terms of assembly, heterogeneous homomer formed from homodimers; disulfide-linked. Belongs to the lipopolysaccharide (LPS) receptor, a multi-protein complex containing at least CD14, LY96 and TLR4. Binds to the extracellular domains of TLR2 and TLR4. Ligand binding induces interaction with TLR4 and oligomerization of the complex. N-glycosylated.

The protein localises to the secreted. The protein resides in the extracellular space. Binds bacterial lipopolysaccharide (LPS). Cooperates with TLR4 in the innate immune response to bacterial lipopolysaccharide (LPS), and with TLR2 in the response to cell wall components from Gram-positive and Gram-negative bacteria. Enhances TLR4-dependent activation of NF-kappa-B. Cells expressing both LY96 and TLR4, but not TLR4 alone, respond to LPS. In Bos taurus (Bovine), this protein is Lymphocyte antigen 96 (LY96).